The primary structure comprises 228 residues: UPF0173 metal-dependent hydrolase PTH_1415 (228 aa).

The protein belongs to the UPF0173 family.

The sequence is that of UPF0173 metal-dependent hydrolase PTH_1415 from Pelotomaculum thermopropionicum (strain DSM 13744 / JCM 10971 / SI).